Here is a 433-residue protein sequence, read N- to C-terminus: L-saccharopine oxidase (433 aa).

A signal peptide spans 1–18 (MSRTIVIVGCGVFGLSTA). Residues asparagine 24, asparagine 119, asparagine 188, and asparagine 229 are each glycosylated (N-linked (GlcNAc...) asparagine).

This sequence belongs to the MSOX/MTOX family. As to quaternary structure, monomer. FAD is required as a cofactor.

The protein localises to the secreted. It is found in the cytoplasm. The protein resides in the nucleus. It carries out the reaction L-saccharopine + O2 + H2O = (S)-2-amino-6-oxohexanoate + L-glutamate + H2O2. This is L-saccharopine oxidase from Schizosaccharomyces pombe (strain 972 / ATCC 24843) (Fission yeast).